Here is a 433-residue protein sequence, read N- to C-terminus: 4-hydroxy-3-methylbut-2-en-1-yl diphosphate synthase (flavodoxin) (433 aa).

Residues 1-10 show a composition bias toward polar residues; that stretch reads MRYMQDSSMP. The disordered stretch occupies residues 1–24; sequence MRYMQDSSMPCQDASPPDVGAAPR. Residues Cys320, Cys323, Cys366, and Glu373 each coordinate [4Fe-4S] cluster.

The protein belongs to the IspG family. [4Fe-4S] cluster serves as cofactor.

The enzyme catalyses (2E)-4-hydroxy-3-methylbut-2-enyl diphosphate + oxidized [flavodoxin] + H2O + 2 H(+) = 2-C-methyl-D-erythritol 2,4-cyclic diphosphate + reduced [flavodoxin]. It participates in isoprenoid biosynthesis; isopentenyl diphosphate biosynthesis via DXP pathway; isopentenyl diphosphate from 1-deoxy-D-xylulose 5-phosphate: step 5/6. Its function is as follows. Converts 2C-methyl-D-erythritol 2,4-cyclodiphosphate (ME-2,4cPP) into 1-hydroxy-2-methyl-2-(E)-butenyl 4-diphosphate. The polypeptide is 4-hydroxy-3-methylbut-2-en-1-yl diphosphate synthase (flavodoxin) (Bordetella bronchiseptica (strain ATCC BAA-588 / NCTC 13252 / RB50) (Alcaligenes bronchisepticus)).